Reading from the N-terminus, the 127-residue chain is MARITAEDCNKIIPDRFRLVVLATRYAKLLNYKVETNQIKKEKRDKPPVIALRRIAAGKVSVAQLEQDLINSLRTRTMIEPLVNQDESEAVEEKFEYLPEVYIGEDYSDLDDQIFIDENGEDYETDK.

Belongs to the RNA polymerase subunit omega family. The RNAP catalytic core consists of 2 alpha, 1 beta, 1 beta' and 1 omega subunit. When a sigma factor is associated with the core the holoenzyme is formed, which can initiate transcription.

The catalysed reaction is RNA(n) + a ribonucleoside 5'-triphosphate = RNA(n+1) + diphosphate. Functionally, promotes RNA polymerase assembly. Latches the N- and C-terminal regions of the beta' subunit thereby facilitating its interaction with the beta and alpha subunits. The polypeptide is DNA-directed RNA polymerase subunit omega (Rickettsia africae (strain ESF-5)).